We begin with the raw amino-acid sequence, 157 residues long: DNA gyrase inhibitor (157 aa).

This sequence belongs to the DNA gyrase inhibitor family. As to quaternary structure, interacts with DNA gyrase.

The protein localises to the cytoplasm. In terms of biological role, inhibits the supercoiling activity of DNA gyrase. Acts by inhibiting DNA gyrase at an early step, prior to (or at the step of) binding of DNA by the gyrase. It protects cells against toxins that target DNA gyrase, by inhibiting activity of these toxins and reducing the formation of lethal double-strand breaks in the cell. The chain is DNA gyrase inhibitor from Shigella boydii serotype 18 (strain CDC 3083-94 / BS512).